Reading from the N-terminus, the 101-residue chain is RNA-binding protein Hfq (101 aa).

A Sm domain is found at 9 to 68 (DPFLNALRRERVPVSIYLVNGIKLQGQVESFDQFVILLKNTVSQMVYKHAISTVVPSRPV). The segment at 63–101 (VPSRPVSHHSNTPSGSTNNYHGSNPSAPQQPQQDSDDAE) is disordered. The span at 70-86 (HHSNTPSGSTNNYHGSN) shows a compositional bias: polar residues.

This sequence belongs to the Hfq family. As to quaternary structure, homohexamer.

RNA chaperone that binds small regulatory RNA (sRNAs) and mRNAs to facilitate mRNA translational regulation in response to envelope stress, environmental stress and changes in metabolite concentrations. Also binds with high specificity to tRNAs. The protein is RNA-binding protein Hfq of Yersinia pseudotuberculosis serotype O:1b (strain IP 31758).